The sequence spans 631 residues: Chaperone protein HtpG (631 aa).

An a; substrate-binding region spans residues 1–342 (MSEQTANKET…SNDLPLNVSR (342 aa)). The tract at residues 343 to 559 (EILQDNKVTQ…DFEMGTQMAK (217 aa)) is b. Positions 560–631 (LLEAAGQAAP…LSAMNQLLAK (72 aa)) are c.

The protein belongs to the heat shock protein 90 family. As to quaternary structure, homodimer.

It localises to the cytoplasm. In terms of biological role, molecular chaperone. Has ATPase activity. This is Chaperone protein HtpG from Aliivibrio fischeri (strain ATCC 700601 / ES114) (Vibrio fischeri).